A 181-amino-acid chain; its full sequence is Adenine phosphoribosyltransferase (181 aa).

It belongs to the purine/pyrimidine phosphoribosyltransferase family. As to quaternary structure, homodimer.

It is found in the cytoplasm. It carries out the reaction AMP + diphosphate = 5-phospho-alpha-D-ribose 1-diphosphate + adenine. It participates in purine metabolism; AMP biosynthesis via salvage pathway; AMP from adenine: step 1/1. Catalyzes a salvage reaction resulting in the formation of AMP, that is energically less costly than de novo synthesis. This chain is Adenine phosphoribosyltransferase, found in Methylorubrum populi (strain ATCC BAA-705 / NCIMB 13946 / BJ001) (Methylobacterium populi).